The following is a 697-amino-acid chain: Pentatricopeptide repeat-containing protein 1, mitochondrial (697 aa).

A mitochondrion-targeting transit peptide spans 1 to 36; it reads MLKRAHYVALHVTLNHNGLSYQRVFSCLTQFPMLRH. PPR repeat units follow at residues 257-288 and 294-328; these read RPFT…VKNK and SDVF…NVNF.

It localises to the mitochondrion. Mitochondrial RNA-binding protein required for the stability of the cox2 and cox3 mRNAs. This chain is Pentatricopeptide repeat-containing protein 1, mitochondrial (ppr1), found in Schizosaccharomyces pombe (strain 972 / ATCC 24843) (Fission yeast).